Here is a 262-residue protein sequence, read N- to C-terminus: 3-methyl-2-oxobutanoate hydroxymethyltransferase (262 aa).

The Mg(2+) site is built by D42 and D81. 3-methyl-2-oxobutanoate-binding positions include 42–43 (DS), D81, and K110. E112 serves as a coordination point for Mg(2+). E180 acts as the Proton acceptor in catalysis.

This sequence belongs to the PanB family. As to quaternary structure, homodecamer; pentamer of dimers. Mg(2+) serves as cofactor.

The protein localises to the cytoplasm. It catalyses the reaction 3-methyl-2-oxobutanoate + (6R)-5,10-methylene-5,6,7,8-tetrahydrofolate + H2O = 2-dehydropantoate + (6S)-5,6,7,8-tetrahydrofolate. It functions in the pathway cofactor biosynthesis; (R)-pantothenate biosynthesis; (R)-pantoate from 3-methyl-2-oxobutanoate: step 1/2. Its function is as follows. Catalyzes the reversible reaction in which hydroxymethyl group from 5,10-methylenetetrahydrofolate is transferred onto alpha-ketoisovalerate to form ketopantoate. The chain is 3-methyl-2-oxobutanoate hydroxymethyltransferase from Legionella pneumophila (strain Corby).